We begin with the raw amino-acid sequence, 157 residues long: SsrA-binding protein (157 aa).

The tract at residues 133-157 (LHDKRETAKERDWQRDKARLMRDKG) is disordered. Positions 135–157 (DKRETAKERDWQRDKARLMRDKG) are enriched in basic and acidic residues.

Belongs to the SmpB family.

It is found in the cytoplasm. In terms of biological role, required for rescue of stalled ribosomes mediated by trans-translation. Binds to transfer-messenger RNA (tmRNA), required for stable association of tmRNA with ribosomes. tmRNA and SmpB together mimic tRNA shape, replacing the anticodon stem-loop with SmpB. tmRNA is encoded by the ssrA gene; the 2 termini fold to resemble tRNA(Ala) and it encodes a 'tag peptide', a short internal open reading frame. During trans-translation Ala-aminoacylated tmRNA acts like a tRNA, entering the A-site of stalled ribosomes, displacing the stalled mRNA. The ribosome then switches to translate the ORF on the tmRNA; the nascent peptide is terminated with the 'tag peptide' encoded by the tmRNA and targeted for degradation. The ribosome is freed to recommence translation, which seems to be the essential function of trans-translation. This Methylobacterium sp. (strain 4-46) protein is SsrA-binding protein.